The sequence spans 757 residues: 5-methyltetrahydropteroyltriglutamate--homocysteine methyltransferase (757 aa).

Residues 17 to 20 (RELK) and K117 contribute to the 5-methyltetrahydropteroyltri-L-glutamate site. Residues 432–434 (IGS) and E485 each bind L-homocysteine. L-methionine is bound by residues 432–434 (IGS) and E485. Residues 516-517 (RC) and W562 contribute to the 5-methyltetrahydropteroyltri-L-glutamate site. D600 lines the L-homocysteine pocket. D600 provides a ligand contact to L-methionine. E606 contacts 5-methyltetrahydropteroyltri-L-glutamate. Residues H642, C644, and E666 each contribute to the Zn(2+) site. H695 (proton donor) is an active-site residue. Zn(2+) is bound at residue C727.

Belongs to the vitamin-B12 independent methionine synthase family. Zn(2+) serves as cofactor.

It catalyses the reaction 5-methyltetrahydropteroyltri-L-glutamate + L-homocysteine = tetrahydropteroyltri-L-glutamate + L-methionine. Its pathway is amino-acid biosynthesis; L-methionine biosynthesis via de novo pathway; L-methionine from L-homocysteine (MetE route): step 1/1. Catalyzes the transfer of a methyl group from 5-methyltetrahydrofolate to homocysteine resulting in methionine formation. The polypeptide is 5-methyltetrahydropteroyltriglutamate--homocysteine methyltransferase (Erwinia tasmaniensis (strain DSM 17950 / CFBP 7177 / CIP 109463 / NCPPB 4357 / Et1/99)).